The sequence spans 155 residues: Small ribosomal subunit protein uS7c (155 aa).

Belongs to the universal ribosomal protein uS7 family. As to quaternary structure, part of the 30S ribosomal subunit.

The protein localises to the plastid. Its subcellular location is the chloroplast. Its function is as follows. One of the primary rRNA binding proteins, it binds directly to 16S rRNA where it nucleates assembly of the head domain of the 30S subunit. This Cedrus deodara (Deodar cedar) protein is Small ribosomal subunit protein uS7c (rps7).